We begin with the raw amino-acid sequence, 284 residues long: 4-diphosphocytidyl-2-C-methyl-D-erythritol kinase (284 aa).

Residue Lys-13 is part of the active site. 96 to 106 (PMGGGLGGGSS) is an ATP binding site. Asp-138 is a catalytic residue.

The protein belongs to the GHMP kinase family. IspE subfamily.

The enzyme catalyses 4-CDP-2-C-methyl-D-erythritol + ATP = 4-CDP-2-C-methyl-D-erythritol 2-phosphate + ADP + H(+). The protein operates within isoprenoid biosynthesis; isopentenyl diphosphate biosynthesis via DXP pathway; isopentenyl diphosphate from 1-deoxy-D-xylulose 5-phosphate: step 3/6. Its function is as follows. Catalyzes the phosphorylation of the position 2 hydroxy group of 4-diphosphocytidyl-2C-methyl-D-erythritol. The sequence is that of 4-diphosphocytidyl-2-C-methyl-D-erythritol kinase from Chromobacterium violaceum (strain ATCC 12472 / DSM 30191 / JCM 1249 / CCUG 213 / NBRC 12614 / NCIMB 9131 / NCTC 9757 / MK).